Reading from the N-terminus, the 85-residue chain is Large ribosomal subunit protein bL27 (85 aa).

Residues 1–20 form a disordered region; that stretch reads MAHKKAGGSTRNGRDSESKR.

This sequence belongs to the bacterial ribosomal protein bL27 family.

This chain is Large ribosomal subunit protein bL27, found in Azotobacter vinelandii (strain DJ / ATCC BAA-1303).